The sequence spans 849 residues: Mechanosensitive ion channel protein 7 (849 aa).

The segment at 1–49 is disordered; that stretch reads MEFRKPFKSHSSYKQIISTGDQNEKTKKKKKLANLDDGDIAKTQSSGSS. Over residues 9-21 the composition is skewed to polar residues; that stretch reads SHSSYKQIISTGD. A run of 6 helical transmembrane segments spans residues 231-251, 274-294, 313-333, 344-364, 606-626, and 642-662; these read AITL…VLSL, LVLI…VFFI, TAVQ…FLFD, VLLL…LWLI, MISF…LEIA, and AFMF…LFII.

The protein belongs to the MscS (TC 1.A.23) family.

It localises to the membrane. Mechanosensitive channel that opens in response to stretch forces in the membrane lipid bilayer. The sequence is that of Mechanosensitive ion channel protein 7 (MSL7) from Arabidopsis thaliana (Mouse-ear cress).